The chain runs to 205 residues: Probable thymidylate kinase (205 aa).

Residue 7-14 participates in ATP binding; the sequence is GIDGAGKS.

Belongs to the thymidylate kinase family.

It carries out the reaction dTMP + ATP = dTDP + ADP. The polypeptide is Probable thymidylate kinase (Thermococcus kodakarensis (strain ATCC BAA-918 / JCM 12380 / KOD1) (Pyrococcus kodakaraensis (strain KOD1))).